Reading from the N-terminus, the 526-residue chain is Peptide chain release factor 3 (526 aa).

The region spanning 8 to 277 is the tr-type G domain; the sequence is GKRRTFAIIS…GLTDWAPAPQ (270 aa). GTP-binding positions include 17–24, 85–89, and 139–142; these read SHPDAGKT, DTPGH, and NKLD.

This sequence belongs to the TRAFAC class translation factor GTPase superfamily. Classic translation factor GTPase family. PrfC subfamily.

The protein localises to the cytoplasm. Increases the formation of ribosomal termination complexes and stimulates activities of RF-1 and RF-2. It binds guanine nucleotides and has strong preference for UGA stop codons. It may interact directly with the ribosome. The stimulation of RF-1 and RF-2 is significantly reduced by GTP and GDP, but not by GMP. The sequence is that of Peptide chain release factor 3 from Aliivibrio fischeri (strain MJ11) (Vibrio fischeri).